A 589-amino-acid polypeptide reads, in one-letter code: Enhancer of polycomb-like protein 1 (589 aa).

Disordered stretches follow at residues 298–339 (GDED…RPAE), 403–430 (MTPP…PNPP), 468–497 (LPSP…DAPV), and 516–589 (LQTV…QPVS). Residues 474-487 (DLSEEQSDRWKYDQ) are compositionally biased toward basic and acidic residues. Positions 557 to 566 (PQPNQSQSLP) are enriched in low complexity. The segment covering 567-589 (LPQPQQPVAQPQPQPQPQAQPVS) has biased composition (pro residues).

Belongs to the enhancer of polycomb family. In terms of assembly, component of the NuA4 histone acetyltransferase complex.

Its subcellular location is the nucleus. Functionally, component of the NuA4 histone acetyltransferase complex which is involved in transcriptional activation of selected genes principally by acetylation of nucleosomal histone H4 and H2A. The NuA4 complex is also involved in DNA repair. Involved in gene silencing by neighboring heterochromatin, blockage of the silencing spreading along the chromosome, and required for cell cycle progression through G2/M. This Neurospora crassa (strain ATCC 24698 / 74-OR23-1A / CBS 708.71 / DSM 1257 / FGSC 987) protein is Enhancer of polycomb-like protein 1 (epl-1).